Here is a 388-residue protein sequence, read N- to C-terminus: Methylthioribose-1-phosphate isomerase (388 aa).

Aspartate 253 functions as the Proton donor in the catalytic mechanism.

Belongs to the eIF-2B alpha/beta/delta subunits family. MtnA subfamily.

Its subcellular location is the cytoplasm. It localises to the nucleus. The catalysed reaction is 5-(methylsulfanyl)-alpha-D-ribose 1-phosphate = 5-(methylsulfanyl)-D-ribulose 1-phosphate. It functions in the pathway amino-acid biosynthesis; L-methionine biosynthesis via salvage pathway; L-methionine from S-methyl-5-thio-alpha-D-ribose 1-phosphate: step 1/6. Catalyzes the interconversion of methylthioribose-1-phosphate (MTR-1-P) into methylthioribulose-1-phosphate (MTRu-1-P). The protein is Methylthioribose-1-phosphate isomerase of Fusarium vanettenii (strain ATCC MYA-4622 / CBS 123669 / FGSC 9596 / NRRL 45880 / 77-13-4) (Fusarium solani subsp. pisi).